The chain runs to 684 residues: Glycine--tRNA ligase beta subunit (684 aa).

This sequence belongs to the class-II aminoacyl-tRNA synthetase family. Tetramer of two alpha and two beta subunits.

The protein resides in the cytoplasm. The enzyme catalyses tRNA(Gly) + glycine + ATP = glycyl-tRNA(Gly) + AMP + diphosphate. This is Glycine--tRNA ligase beta subunit from Pseudomonas aeruginosa (strain UCBPP-PA14).